Here is a 555-residue protein sequence, read N- to C-terminus: MAHLSDLDIANQSELKPIGEIAEKAGIPADALEQYGHYKAKIDINQIKPKDNKGKVVLVTAMSPTPAGEGKSTVTVGLSDAFNELKKNVMVALREPALGPTFGIKGGATGGGYAQVLPMEDINLHFNGDFHAITTANNALSAFIDNHIHQGNELGIDVRRVEWKRVLDMNDRALRHVNVGLGGPTNGVPREDGFNITVASEVMAILCLARNINDLKEKISRITIGYTRDRKPVTVADLKVEGALAMILKDAIKPNLVQTIEGTPALVHGGPFANIAHGCNSILATETARDLADIVVTEAGFGSDLGAEKFIDIKAREAGFEPSAVVLVATVRALKMHGGVAKDDLKEENVEAVKAGIVNLERHVNNIRKFGVEPVIALNAFIHDTDAETEAVKAWAKENNVRIALTEVWEKGGKGGVELANQVLEVIEQPNDFKFLYDLDQSLEEKIETIVKDIYGGSSVTFSKKAKKQLKEFTDNGWGQYPICMAKTQYSFSDDATALGAPTDFDITIRELEAKTGAGFIVALTGAIMTMPGLPKKPAALNMDVTEDGHAVGLF.

65 to 72 (TPAGEGKS) provides a ligand contact to ATP.

It belongs to the formate--tetrahydrofolate ligase family.

It carries out the reaction (6S)-5,6,7,8-tetrahydrofolate + formate + ATP = (6R)-10-formyltetrahydrofolate + ADP + phosphate. Its pathway is one-carbon metabolism; tetrahydrofolate interconversion. The chain is Formate--tetrahydrofolate ligase from Staphylococcus haemolyticus (strain JCSC1435).